A 132-amino-acid polypeptide reads, in one-letter code: Large ribosomal subunit protein uL14 (132 aa).

It belongs to the universal ribosomal protein uL14 family. Part of the 50S ribosomal subunit. Forms a cluster with proteins L3 and L24e, part of which may contact the 16S rRNA in 2 intersubunit bridges.

In terms of biological role, binds to 23S rRNA. Forms part of two intersubunit bridges in the 70S ribosome. The protein is Large ribosomal subunit protein uL14 of Picrophilus torridus (strain ATCC 700027 / DSM 9790 / JCM 10055 / NBRC 100828 / KAW 2/3).